Here is a 429-residue protein sequence, read N- to C-terminus: Protein ABERRANT PANICLE ORGANIZATION 1 (429 aa).

Over residues 1–11 (MMNPRRLPPLP) the composition is skewed to pro residues. The tract at residues 1 to 21 (MMNPRRLPPLPSSTSSASAAD) is disordered. Residues 25–71 (PRVWRRLPQPLVDRILACLPTPSFLRLRAACRRFYHLLFSSPFLHSH) form the F-box domain. 2 helical membrane-spanning segments follow: residues 72 to 92 (LLLS…GHLL) and 112 to 132 (VAGG…LAFL). 3 Kelch repeats span residues 229 to 277 (MAFA…ELGG), 284 to 339 (RVAL…AEGG), and 350 to 397 (YVVL…GAAG).

As to quaternary structure, part of a putative SCF (ASK/Cullin/F-box) ubiquitin ligase complex. Interacts with FL/APO2. As to expression, expressed in apical meristems and the lateral organ primordia throughout development. Expressed in seedlings, roots, leaves, shoot apical meristem (SAM), developing panicles, and, at lower levels, in developing seeds.

It localises to the membrane. The protein operates within protein modification; protein ubiquitination. Component of SCF(ASK-cullin-F-box) E3 ubiquitin ligase complexes, which may mediate the ubiquitination and subsequent proteasomal degradation of target proteins. Together with FL/APO2, involved in the temporal regulation of meristem identity during both vegetative and reproductive developments in an APO2-dependent manner. Promotes spikelet formation by suppressing the precocious conversion of inflorescence meristems to spikelet meristems, probably via a positive regulation of class-C floral homeotic genes, but not of class-B genes, and through the control of cell proliferation in meristems. Mediates culm development and strength/diameter enhancement at internodes. Required for the regulation of the plastochron, floral organ identity, and floral determinacy. Controls the number of primary rachis branches (PRBs). May trigger the formation of vascular bundle systems which, consequently, promote carbohydrate translocation to panicles. Involved in ozone-induced grain yield regulation. This is Protein ABERRANT PANICLE ORGANIZATION 1 from Oryza sativa subsp. japonica (Rice).